A 276-amino-acid polypeptide reads, in one-letter code: Small ribosomal subunit protein uS3 (276 aa).

Residues 38-106 enclose the KH type-2 domain; that stretch reads IRRMMTKGME…QVQLNILEVK (69 aa). Residues 216–228 are compositionally biased toward low complexity; the sequence is NAAARAGNRPARG. The tract at residues 216–276 is disordered; that stretch reads NAAARAGNRP…PAAESTGTEA (61 aa). Over residues 229–245 the composition is skewed to basic and acidic residues; it reads GADRPAGRGGRGGERGG. Residues 254 to 269 show a composition bias toward low complexity; sequence PAAEAPKADAAAAPAA.

Belongs to the universal ribosomal protein uS3 family. In terms of assembly, part of the 30S ribosomal subunit. Forms a tight complex with proteins S10 and S14.

In terms of biological role, binds the lower part of the 30S subunit head. Binds mRNA in the 70S ribosome, positioning it for translation. The sequence is that of Small ribosomal subunit protein uS3 from Streptomyces griseus subsp. griseus (strain JCM 4626 / CBS 651.72 / NBRC 13350 / KCC S-0626 / ISP 5235).